The sequence spans 413 residues: Clusterin-associated protein 1 (413 aa).

The stretch at 198 to 291 (KTKDLLNNVA…ERFEEAKNTL (94 aa)) forms a coiled coil. The interval 305 to 413 (LLKSGSNDDS…EPLDESDNDF (109 aa)) is disordered. 2 stretches are compositionally biased toward acidic residues: residues 312–328 (DDSDIDIQEDDESDSEL) and 360–388 (DSDDNEDSEESEIDMEDDDDEDDDLEDES). Phosphoserine is present on residues Ser314, Ser324, and Ser326. A Phosphoserine modification is found at Ser409.

This sequence belongs to the CLUAP1 family. Interacts with CLU/clusterin. Interacts with UBXN10; the interaction is direct. In terms of tissue distribution, expressed in testis, thyroid and trachea and to a lower extent in spinal cord and adrenal gland. Highly expressed in colon cancer and osteosarcoma cell lines.

The protein localises to the cell projection. The protein resides in the cilium. It is found in the nucleus. In terms of biological role, required for cilia biogenesis. Appears to function within the multiple intraflagellar transport complex B (IFT-B). Key regulator of hedgehog signaling. The protein is Clusterin-associated protein 1 (CLUAP1) of Homo sapiens (Human).